A 98-amino-acid polypeptide reads, in one-letter code: NADH-ubiquinone oxidoreductase chain 4L (98 aa).

Helical transmembrane passes span 1–21 (MSMVYANIFLAFIMSLMGLLM), 29–49 (SLLCLEGMMLSLFVMMTVTIL), and 61–81 (IILLVFAACEAALGLSLLVMV).

It belongs to the complex I subunit 4L family. Core subunit of respiratory chain NADH dehydrogenase (Complex I) which is composed of 45 different subunits.

The protein localises to the mitochondrion inner membrane. The catalysed reaction is a ubiquinone + NADH + 5 H(+)(in) = a ubiquinol + NAD(+) + 4 H(+)(out). Its function is as follows. Core subunit of the mitochondrial membrane respiratory chain NADH dehydrogenase (Complex I) which catalyzes electron transfer from NADH through the respiratory chain, using ubiquinone as an electron acceptor. Part of the enzyme membrane arm which is embedded in the lipid bilayer and involved in proton translocation. This is NADH-ubiquinone oxidoreductase chain 4L (MT-ND4L) from Halichoerus grypus (Gray seal).